We begin with the raw amino-acid sequence, 864 residues long: Translation initiation factor IF-2 (864 aa).

The segment at methionine 1–serine 252 is disordered. Basic and acidic residues predominate over residues lysine 78–aspartate 90. Residues valine 106–proline 120 are compositionally biased toward polar residues. Gly residues predominate over residues arginine 150–glycine 212. Over residues histidine 239 to serine 252 the composition is skewed to basic and acidic residues. Residues asparagine 359–lysine 528 enclose the tr-type G domain. The segment at glycine 368 to threonine 375 is G1. Glycine 368–threonine 375 serves as a coordination point for GTP. The interval glycine 393–histidine 397 is G2. The segment at aspartate 414 to glycine 417 is G3. GTP-binding positions include aspartate 414–histidine 418 and asparagine 468–aspartate 471. The G4 stretch occupies residues asparagine 468–aspartate 471. Positions serine 504–arginine 506 are G5.

It belongs to the TRAFAC class translation factor GTPase superfamily. Classic translation factor GTPase family. IF-2 subfamily.

It is found in the cytoplasm. In terms of biological role, one of the essential components for the initiation of protein synthesis. Protects formylmethionyl-tRNA from spontaneous hydrolysis and promotes its binding to the 30S ribosomal subunits. Also involved in the hydrolysis of GTP during the formation of the 70S ribosomal complex. The chain is Translation initiation factor IF-2 from Leptospira borgpetersenii serovar Hardjo-bovis (strain L550).